Reading from the N-terminus, the 288-residue chain is 33 kDa chaperonin (288 aa).

2 disulfide bridges follow: cysteine 233–cysteine 235 and cysteine 267–cysteine 270.

The protein belongs to the HSP33 family. In terms of processing, under oxidizing conditions two disulfide bonds are formed involving the reactive cysteines. Under reducing conditions zinc is bound to the reactive cysteines and the protein is inactive.

The protein localises to the cytoplasm. Functionally, redox regulated molecular chaperone. Protects both thermally unfolding and oxidatively damaged proteins from irreversible aggregation. Plays an important role in the bacterial defense system toward oxidative stress. This is 33 kDa chaperonin from Actinobacillus succinogenes (strain ATCC 55618 / DSM 22257 / CCUG 43843 / 130Z).